The following is a 506-amino-acid chain: Sodium-coupled neutral amino acid symporter 2 (506 aa).

The interval 1-23 (MKKAEMGRFSISPDEDSSSYSSN) is disordered. Residues 1–76 (MKKAEMGRFS…HPGTTSFGMS (76 aa)) lie on the Cytoplasmic side of the membrane. The tract at residues 1–96 (MKKAEMGRFS…SGILGLSYAM (96 aa)) is regulates protein turnover upon amino acid deprivation. A phosphoserine mark is found at Ser10, Ser12, Ser21, Ser22, and Ser55. A helical transmembrane segment spans residues 77-96 (VFNLSNAIVGSGILGLSYAM). Asn82 serves as a coordination point for Na(+). Residues 97–102 (ANTGIA) are Extracellular-facing. A helical membrane pass occupies residues 103–123 (LFIILLTFVSIFSLYSVHLLL). The Cytoplasmic segment spans residues 124–158 (KTANEGGSLLYEQLGYKAFGLVGKLAASGSITMQN). The helical transmembrane segment at 159–177 (IGAMSSYLFIVKYELPLVI) threads the bilayer. Residues 178–188 (QALTNIEDKTG) lie on the Extracellular side of the membrane. A helical transmembrane segment spans residues 189 to 209 (LWYLNGNYLVLLVSLVVILPL). The Cytoplasmic portion of the chain corresponds to 210–217 (SLFRNLGY). A helical transmembrane segment spans residues 218–238 (LGYTSGLSLLCMVFFLIVVIC). The Extracellular segment spans residues 239 to 292 (KKFQVPCPVEAALIINETINTTLTQPTALVPALSHNVTENDSCRPHYFIFNSQT). A disulfide bond links Cys245 and Cys281. N-linked (GlcNAc...) asparagine glycosylation is found at Asn258 and Asn274. The chain crosses the membrane as a helical span at residues 293–313 (VYAVPILIFSFVCHPAVLPIY). Over 314–329 (EELKDRSRRRMMNVSK) the chain is Cytoplasmic. A helical membrane pass occupies residues 330 to 350 (ISFFAMFLMYLLAALFGYLTF). Topologically, residues 351–371 (YEHVESELLHTYSSILGTDIL) are extracellular. A helical membrane pass occupies residues 372 to 392 (LLIVRLAVLMAVTLTVPVVIF). A Na(+)-binding site is contributed by Thr386. The Cytoplasmic portion of the chain corresponds to 393–413 (PIRSSVTHLLCASKDFSWWRH). Residues 414–434 (SLITVSILAFTNLLVIFVPTI) form a helical membrane-spanning segment. Residues 435 to 436 (RD) are Extracellular-facing. A helical membrane pass occupies residues 437-457 (IFGFIGASAASMLIFILPSAF). Residues 458-472 (YIKLVKKEPMKSVQK) lie on the Cytoplasmic side of the membrane. A helical transmembrane segment spans residues 473–495 (IGALFFLLSGVLVMTGSMALIVL). Topologically, residues 496 to 506 (DWVHNAPGGGH) are extracellular.

It belongs to the amino acid/polyamine transporter 2 family. Post-translationally, polyubiquitination by NEDD4L regulates the degradation and the activity of SLC38A2. In terms of tissue distribution, ubiquitously expressed. Expressed in neocortex. Widely expressed in the central nervous system with higher concentrations in caudal regions. Expressed by glutamatergic and GABAergic neurons together with astrocytes and other non-neuronal cells in the cerebral cortex (at protein level).

The protein resides in the cell membrane. It catalyses the reaction L-alanine(in) + Na(+)(in) = L-alanine(out) + Na(+)(out). The enzyme catalyses glycine(in) + Na(+)(in) = glycine(out) + Na(+)(out). It carries out the reaction L-serine(in) + Na(+)(in) = L-serine(out) + Na(+)(out). The catalysed reaction is L-proline(in) + Na(+)(in) = L-proline(out) + Na(+)(out). It catalyses the reaction L-methionine(in) + Na(+)(in) = L-methionine(out) + Na(+)(out). The enzyme catalyses L-histidine(in) + Na(+)(in) = L-histidine(out) + Na(+)(out). It carries out the reaction L-asparagine(in) + Na(+)(in) = L-asparagine(out) + Na(+)(out). The catalysed reaction is L-glutamine(in) + Na(+)(in) = L-glutamine(out) + Na(+)(out). It catalyses the reaction L-threonine(in) + Na(+)(in) = L-threonine(out) + Na(+)(out). The enzyme catalyses L-leucine(in) + Na(+)(in) = L-leucine(out) + Na(+)(out). It carries out the reaction L-phenylalanine(in) + Na(+)(in) = L-phenylalanine(out) + Na(+)(out). With respect to regulation, inhibited by N-methyl-D-glucamine. Inhibited by choline. Allosteric regulation of sodium ions binding by pH. Its function is as follows. Symporter that cotransports neutral amino acids and sodium ions from the extracellular to the intracellular side of the cell membrane. The transport is pH-sensitive, Li(+)-intolerant, electrogenic, driven by the Na(+) electrochemical gradient and cotransports of neutral amino acids and sodium ions with a stoichiometry of 1:1. May function in the transport of amino acids at the blood-brain barrier. May function in the transport of amino acids in the supply of maternal nutrients to the fetus through the placenta. Maintains a key metabolic glutamine/glutamate balance underpinning retrograde signaling by dendritic release of the neurotransmitter glutamate. Transports L-proline in differentiating osteoblasts for the efficient synthesis of proline-enriched proteins and provides proline essential for osteoblast differentiation and bone formation during bone development. This is Sodium-coupled neutral amino acid symporter 2 from Homo sapiens (Human).